Consider the following 142-residue polypeptide: Large ribosomal subunit protein uL22c (142 aa).

This sequence belongs to the universal ribosomal protein uL22 family. Part of the 50S ribosomal subunit.

Its subcellular location is the plastid. It is found in the chloroplast. Functionally, this protein binds specifically to 23S rRNA. Its function is as follows. The globular domain of the protein is located near the polypeptide exit tunnel on the outside of the subunit, while an extended beta-hairpin is found that lines the wall of the exit tunnel in the center of the 70S ribosome. The sequence is that of Large ribosomal subunit protein uL22c (rpl22) from Pinus thunbergii (Japanese black pine).